The sequence spans 493 residues: Aspartyl/glutamyl-tRNA(Asn/Gln) amidotransferase subunit B (493 aa).

The protein belongs to the GatB/GatE family. GatB subfamily. As to quaternary structure, heterotrimer of A, B and C subunits.

It carries out the reaction L-glutamyl-tRNA(Gln) + L-glutamine + ATP + H2O = L-glutaminyl-tRNA(Gln) + L-glutamate + ADP + phosphate + H(+). It catalyses the reaction L-aspartyl-tRNA(Asn) + L-glutamine + ATP + H2O = L-asparaginyl-tRNA(Asn) + L-glutamate + ADP + phosphate + 2 H(+). Allows the formation of correctly charged Asn-tRNA(Asn) or Gln-tRNA(Gln) through the transamidation of misacylated Asp-tRNA(Asn) or Glu-tRNA(Gln) in organisms which lack either or both of asparaginyl-tRNA or glutaminyl-tRNA synthetases. The reaction takes place in the presence of glutamine and ATP through an activated phospho-Asp-tRNA(Asn) or phospho-Glu-tRNA(Gln). The chain is Aspartyl/glutamyl-tRNA(Asn/Gln) amidotransferase subunit B from Aromatoleum aromaticum (strain DSM 19018 / LMG 30748 / EbN1) (Azoarcus sp. (strain EbN1)).